Consider the following 130-residue polypeptide: Small ribosomal subunit protein uS9 (130 aa).

Residues 105–115 (TRDSRQVERKK) are compositionally biased toward basic and acidic residues. The interval 105–130 (TRDSRQVERKKVGFRKSRKRTQFSKR) is disordered. Over residues 116–130 (VGFRKSRKRTQFSKR) the composition is skewed to basic residues.

The protein belongs to the universal ribosomal protein uS9 family.

In Buchnera aphidicola subsp. Schizaphis graminum (strain Sg), this protein is Small ribosomal subunit protein uS9.